The following is a 246-amino-acid chain: Purine nucleoside phosphorylase ORF3 (246 aa).

Residues His-71, Cys-110, and His-127 each contribute to the Zn(2+) site.

Belongs to the purine nucleoside phosphorylase YfiH/LACC1 family. Homodimer. It depends on Cu(2+) as a cofactor. Zn(2+) is required as a cofactor.

It carries out the reaction adenosine + phosphate = alpha-D-ribose 1-phosphate + adenine. The catalysed reaction is S-methyl-5'-thioadenosine + phosphate = 5-(methylsulfanyl)-alpha-D-ribose 1-phosphate + adenine. It catalyses the reaction inosine + phosphate = alpha-D-ribose 1-phosphate + hypoxanthine. The enzyme catalyses adenosine + H2O + H(+) = inosine + NH4(+). In terms of biological role, purine nucleoside enzyme that catalyzes the phosphorolysis of adenosine and inosine nucleosides, yielding D-ribose 1-phosphate and the respective free bases, adenine and hypoxanthine. Also catalyzes the phosphorolysis of S-methyl-5'-thioadenosine into adenine and S-methyl-5-thio-alpha-D-ribose 1-phosphate. Also has adenosine deaminase activity. The chain is Purine nucleoside phosphorylase ORF3 from Streptomyces griseus.